The sequence spans 242 residues: Lectin-like protein At1g53060 (242 aa).

Residues 3-237 form a legume-lectin like region; that stretch reads FHGDAEYASE…RHEILDWSFE (235 aa). Position 207 is a phosphoserine (Ser-207).

It belongs to the leguminous lectin family.

The protein is Lectin-like protein At1g53060 of Arabidopsis thaliana (Mouse-ear cress).